Here is a 485-residue protein sequence, read N- to C-terminus: uncharacterized protein (485 aa).

A run of 11 helical transmembrane segments spans residues Leu79 to Ala99, Val117 to Phe137, Phe139 to Leu159, Val170 to Ile190, Trp199 to Leu219, Ile275 to Ile295, Gly313 to Ile333, Leu355 to Thr375, Ile380 to Ser400, Gly421 to Phe441, and Trp448 to Phe468.

This sequence belongs to the major facilitator superfamily. CAR1 family.

It is found in the membrane. This is an uncharacterized protein from Schizosaccharomyces pombe (strain 972 / ATCC 24843) (Fission yeast).